Here is a 134-residue protein sequence, read N- to C-terminus: Interleukin-5 (134 aa).

An N-terminal signal peptide occupies residues 1 to 21; the sequence is MRMLLNLSLLALGAAYVSAFA. 2 N-linked (GlcNAc...) asparagine glycosylation sites follow: Asn-76 and Asn-90.

It belongs to the IL-5 family. In terms of assembly, homodimer; disulfide-linked. Interacts with IL5RA. Interacts with CSF2RB.

Its subcellular location is the secreted. Homodimeric cytokine expressed predominantly by T-lymphocytes and NK cells that plays an important role in the survival, differentiation, and chemotaxis of eosinophils. Also acts on activated and resting B-cells to induce immunoglobulin production, growth, and differentiation. Mechanistically, exerts its biological effects through a receptor composed of IL5RA subunit and the cytokine receptor common subunit beta/CSF2RB. Binding to the receptor leads to activation of various kinases including LYN, SYK and JAK2 and thereby propagates signals through the RAS-MAPK and JAK-STAT5 pathways respectively. This Canis lupus familiaris (Dog) protein is Interleukin-5 (IL5).